The chain runs to 512 residues: Bestrophin-2 (512 aa).

Residues 1–31 (MTVTYTARVAKARFGGFSKLLLLWRGSIYKL) lie on the Cytoplasmic side of the membrane. Ala10 is a binding site for Ca(2+). The chain crosses the membrane as a helical span at residues 32-51 (LWRELLCFLGLFMALSAAYR). Residues 52-60 (FVLTEEQKR) are Extracellular-facing. Residues 61–82 (YFEKLVLYCDRYASLIPVSFVL) traverse the membrane as a helical segment. Residues 83–238 (GFYVTLVVHR…WISVPLVYTQ (156 aa)) are Cytoplasmic-facing. Residues 239 to 255 (VVTIAVYSYFLACLIGR) traverse the membrane as a helical segment. The Extracellular portion of the chain corresponds to 256-274 (QFLDPAQGYKDHDLDLCVP). Residues 275–288 (IFTLLQFFFYAGWL) traverse the membrane as a helical segment. Topologically, residues 289–512 (KVAEQLINPF…PIGEEEESLA (224 aa)) are cytoplasmic. Gln293, Asn296, Asp301, and Asp304 together coordinate Ca(2+). Residues 453-512 (VDLGQPEPESEPITGPESPALVPAPRAPSEPLTVVPLSGTRGPAPPWLPSPIGEEEESLA) are disordered.

The protein belongs to the anion channel-forming bestrophin (TC 1.A.46) family. Calcium-sensitive chloride channel subfamily. In terms of assembly, pentamer. Interacts with GLUL; this interaction tethers a fraction of GLUL to the membrane, causing a decrease of cytosolic glutamine synthase (GS) activity and inhibits the chloride channel activity of BEST2 by affecting the gating at the aperture in the absence of intracellular glutamate.

It is found in the cell membrane. It localises to the basolateral cell membrane. The enzyme catalyses chloride(in) = chloride(out). It catalyses the reaction iodide(out) = iodide(in). It carries out the reaction hydrogencarbonate(in) = hydrogencarbonate(out). The catalysed reaction is L-glutamate(out) = L-glutamate(in). The enzyme catalyses L-glutamine(out) = L-glutamine(in). Chloride channel activity is allosterically inhibited by GLUL/glutamine synthase (GS) which affects the gating at the aperture in the absence of intracellular glutamate. Inhibitory effect of GLUL is relieved upon increasing of intracellular level of L-glutamate. In terms of biological role, ligand-gated anion channel that allows the movement of anions across cell membranes when activated by calcium (Ca2+). Transports a large specter of anions, namely mediates the movement of chloride, L-glutamate and iodide. Calcium-binding triggers the dilation of the aperture, but calcium-dependent gating is only effective when the size of the passing anion is bigger than the closed aperture. Mediates the calcium-activated hydrogencarbonate movement and participates in colonic hydrogencarbonate secretion concomitant with mucin secretion. In non-pigmented epithelium (NPE), mediates the efflux of intracellular L-glutamate; binding of intracellular L-glutamate activates and open both the neck and the aperture of the channel, leading to L-glutamate exit promoting chloride influx movement from the extracellular side in trans. Also exhibits a directional permeability for intracellular glutamine, in a similar manner as for L-glutamate. In Bos taurus (Bovine), this protein is Bestrophin-2.